A 137-amino-acid polypeptide reads, in one-letter code: Fatty acid-binding protein homolog 7 (137 aa).

The protein belongs to the calycin superfamily. Fatty-acid binding protein (FABP) family.

This is Fatty acid-binding protein homolog 7 (lbp-7) from Caenorhabditis elegans.